The following is a 364-amino-acid chain: D-alanine--D-alanine ligase A (364 aa).

Positions 145–348 (KRLLRDAGLN…YTDLISRLIE (204 aa)) constitute an ATP-grasp domain. 175-230 (ESRLGLPLFVKPANQGSSVGVSKVANEAQYQQAVALAFEFDHKVVVEQGIKGREIE) contacts ATP. 3 residues coordinate Mg(2+): Asp-302, Glu-315, and Asn-317.

It belongs to the D-alanine--D-alanine ligase family. The cofactor is Mg(2+). Mn(2+) is required as a cofactor.

The protein resides in the cytoplasm. It catalyses the reaction 2 D-alanine + ATP = D-alanyl-D-alanine + ADP + phosphate + H(+). The protein operates within cell wall biogenesis; peptidoglycan biosynthesis. In terms of biological role, cell wall formation. This chain is D-alanine--D-alanine ligase A (ddlA), found in Salmonella typhi.